Consider the following 339-residue polypeptide: Phenylalanine--tRNA ligase alpha subunit (339 aa).

Glutamate 253 lines the Mg(2+) pocket.

It belongs to the class-II aminoacyl-tRNA synthetase family. Phe-tRNA synthetase alpha subunit type 1 subfamily. As to quaternary structure, tetramer of two alpha and two beta subunits. The cofactor is Mg(2+).

The protein resides in the cytoplasm. The enzyme catalyses tRNA(Phe) + L-phenylalanine + ATP = L-phenylalanyl-tRNA(Phe) + AMP + diphosphate + H(+). The protein is Phenylalanine--tRNA ligase alpha subunit of Chromohalobacter salexigens (strain ATCC BAA-138 / DSM 3043 / CIP 106854 / NCIMB 13768 / 1H11).